The chain runs to 185 residues: Elongation factor P (185 aa).

Belongs to the elongation factor P family.

Its subcellular location is the cytoplasm. Its pathway is protein biosynthesis; polypeptide chain elongation. Its function is as follows. Involved in peptide bond synthesis. Stimulates efficient translation and peptide-bond synthesis on native or reconstituted 70S ribosomes in vitro. Probably functions indirectly by altering the affinity of the ribosome for aminoacyl-tRNA, thus increasing their reactivity as acceptors for peptidyl transferase. The protein is Elongation factor P of Geobacillus thermodenitrificans (strain NG80-2).